The primary structure comprises 428 residues: MTQVFQKVSAIRGMNDVLPGPSARWEKFEEIVRGWLRSYGYRNVRTPVLEHTRLFARGIGEVTDIVEKEMYTFTDALNGDSLTMRPEMTAGIVRASIEHNMLYDRPHRVYAIGPVFRHERPQRGRYRQFHQIDVEALGFAGPDVDAEMIVMLARLWKLLGLQDVRLELNSLGQPAERAAHRAALIEHLERHQDILDEDGRRRMYSNPLRVLDTKNPAMQEMADSAPRLFDFLGEESRSHFDGLCQRLADAGIEYRLNPRLVRGLDYYNLTVFEWVTDRLGAQGTVCGGGRYDGLVELLGGKPAPAVGFAIGMERLLDLWEQSVEIEQPAECEVYIVHQGEEGQRLAARVGEQLRDAGLDVIVHAGAAGFKAQFKRADASGARIAVILGGDEVASRTASIKHLRGPVGADAAQQQVPLAQLADVLKSKG.

It belongs to the class-II aminoacyl-tRNA synthetase family. In terms of assembly, homodimer.

It is found in the cytoplasm. It catalyses the reaction tRNA(His) + L-histidine + ATP = L-histidyl-tRNA(His) + AMP + diphosphate + H(+). The protein is Histidine--tRNA ligase of Bordetella bronchiseptica (strain ATCC BAA-588 / NCTC 13252 / RB50) (Alcaligenes bronchisepticus).